The chain runs to 191 residues: UPF0398 protein LCABL_17010 (191 aa).

Belongs to the UPF0398 family.

The protein is UPF0398 protein LCABL_17010 of Lacticaseibacillus casei (strain BL23) (Lactobacillus casei).